A 484-amino-acid polypeptide reads, in one-letter code: Glycogen synthase (484 aa).

Lys-15 lines the ADP-alpha-D-glucose pocket.

The protein belongs to the glycosyltransferase 1 family. Bacterial/plant glycogen synthase subfamily.

The catalysed reaction is [(1-&gt;4)-alpha-D-glucosyl](n) + ADP-alpha-D-glucose = [(1-&gt;4)-alpha-D-glucosyl](n+1) + ADP + H(+). It functions in the pathway glycan biosynthesis; glycogen biosynthesis. Functionally, synthesizes alpha-1,4-glucan chains using ADP-glucose. This is Glycogen synthase from Koribacter versatilis (strain Ellin345).